A 108-amino-acid polypeptide reads, in one-letter code: UPF0060 membrane protein DSY4157 (108 aa).

The next 4 helical transmembrane spans lie at 6–26 (ILFILAGLAEIGGGYLVWLWL), 31–51 (PYWYGVIGAIILVFYGIIPTL), 60–80 (VYAAYGGVFIILAVLWGWGVD), and 86–106 (TYDWIGAAICLVGVTVMLWAP).

It belongs to the UPF0060 family.

Its subcellular location is the cell membrane. The sequence is that of UPF0060 membrane protein DSY4157 from Desulfitobacterium hafniense (strain Y51).